The chain runs to 89 residues: Signal recognition particle 19 kDa protein (89 aa).

It belongs to the SRP19 family. Part of the signal recognition particle protein translocation system, which is composed of SRP and FtsY. Archaeal SRP consists of a 7S RNA molecule of 300 nucleotides and two protein subunits: SRP54 and SRP19.

It is found in the cytoplasm. In terms of biological role, involved in targeting and insertion of nascent membrane proteins into the cytoplasmic membrane. Binds directly to 7S RNA and mediates binding of the 54 kDa subunit of the SRP. The chain is Signal recognition particle 19 kDa protein from Methanococcus maripaludis (strain C5 / ATCC BAA-1333).